Consider the following 172-residue polypeptide: Scytalone dehydratase-like protein Arp1 (172 aa).

Residue Y49 participates in substrate binding. Catalysis depends on residues H84 and H109. A substrate-binding site is contributed by N130.

It belongs to the scytalone dehydratase family. Homotrimer. Each subunit contains an active site, located in the central part of the hydrophobic core of the monomer, which functions independently.

Scytalone dehydratase-like protein; part of the Pks2 gene cluster that mediates the formation of infectious structures (appressoria), enabling these fungi to kill insects faster. The product of the Pks2 gene cluster is different from the one of Pks1 and has still not been identified. The sequence is that of Scytalone dehydratase-like protein Arp1 from Metarhizium guizhouense (strain ARSEF 977).